A 232-amino-acid polypeptide reads, in one-letter code: 2,3,4,5-tetrahydropyridine-2,6-dicarboxylate N-acetyltransferase (232 aa).

It belongs to the transferase hexapeptide repeat family. DapH subfamily.

It catalyses the reaction (S)-2,3,4,5-tetrahydrodipicolinate + acetyl-CoA + H2O = L-2-acetamido-6-oxoheptanedioate + CoA. It functions in the pathway amino-acid biosynthesis; L-lysine biosynthesis via DAP pathway; LL-2,6-diaminopimelate from (S)-tetrahydrodipicolinate (acetylase route): step 1/3. Functionally, catalyzes the transfer of an acetyl group from acetyl-CoA to tetrahydrodipicolinate. This Streptococcus suis (strain 98HAH33) protein is 2,3,4,5-tetrahydropyridine-2,6-dicarboxylate N-acetyltransferase.